Consider the following 327-residue polypeptide: Eukaryotic translation initiation factor 3 subunit I (327 aa).

WD repeat units follow at residues 8–49 (GHDR…GTYD), 51–91 (HNGV…NSVS), 144–183 (SLQT…DIVN), 188–227 (AHKF…CLKT), 229–268 (KAER…GHFE), and 285–324 (GHFG…LKFD).

Belongs to the eIF-3 subunit I family. In terms of assembly, component of the eukaryotic translation initiation factor 3 (eIF-3) complex.

It is found in the cytoplasm. In terms of biological role, component of the eukaryotic translation initiation factor 3 (eIF-3) complex, which is involved in protein synthesis of a specialized repertoire of mRNAs and, together with other initiation factors, stimulates binding of mRNA and methionyl-tRNAi to the 40S ribosome. The eIF-3 complex specifically targets and initiates translation of a subset of mRNAs involved in cell proliferation. This is Eukaryotic translation initiation factor 3 subunit I from Brugia malayi (Filarial nematode worm).